The primary structure comprises 461 residues: Anthranilate synthase component 1 (461 aa).

Residues Ser43 and Pro238–Met240 contribute to the L-tryptophan site. Chorismate is bound at residue Gly273–Thr274. Glu300 provides a ligand contact to Mg(2+). Residues Tyr388, Arg408, Gly422–Gly424, and Gly424 each bind chorismate. Position 437 (Glu437) interacts with Mg(2+).

This sequence belongs to the anthranilate synthase component I family. Heterotetramer consisting of two non-identical subunits: a beta subunit (TrpG) and a large alpha subunit (TrpE). Requires Mg(2+) as cofactor.

The enzyme catalyses chorismate + L-glutamine = anthranilate + pyruvate + L-glutamate + H(+). It functions in the pathway amino-acid biosynthesis; L-tryptophan biosynthesis; L-tryptophan from chorismate: step 1/5. With respect to regulation, feedback inhibited by tryptophan. Part of a heterotetrameric complex that catalyzes the two-step biosynthesis of anthranilate, an intermediate in the biosynthesis of L-tryptophan. In the first step, the glutamine-binding beta subunit (TrpG) of anthranilate synthase (AS) provides the glutamine amidotransferase activity which generates ammonia as a substrate that, along with chorismate, is used in the second step, catalyzed by the large alpha subunit of AS (TrpE) to produce anthranilate. In the absence of TrpG, TrpE can synthesize anthranilate directly from chorismate and high concentrations of ammonia. The polypeptide is Anthranilate synthase component 1 (trpE) (Methanothermobacter marburgensis (strain ATCC BAA-927 / DSM 2133 / JCM 14651 / NBRC 100331 / OCM 82 / Marburg) (Methanobacterium thermoautotrophicum)).